Here is a 185-residue protein sequence, read N- to C-terminus: Adenylyl-sulfate kinase (185 aa).

An ATP-binding site is contributed by 13–20 (GLSGAGKS). The active-site Phosphoserine intermediate is the serine 86.

The protein belongs to the APS kinase family.

The enzyme catalyses adenosine 5'-phosphosulfate + ATP = 3'-phosphoadenylyl sulfate + ADP + H(+). The protein operates within sulfur metabolism; hydrogen sulfide biosynthesis; sulfite from sulfate: step 2/3. Functionally, catalyzes the synthesis of activated sulfate. The chain is Adenylyl-sulfate kinase from Myxococcus xanthus (strain DK1622).